The following is a 445-amino-acid chain: MARKFFGTDGIRGRTNSGVMTAEIAMKVGQAAGTYFQRGTHRHRVVIGKDTRLSGYMMESAMTAGFTSVGMDVVLLGPMPTPAVAMLTRSMRADLGVMISASHNPFEDNGIKLFGPDGYKLSDEAELTIESMLLQELPLADAAQVGRARRIEDARGRYIHAVKASLPDNVRLDGLRIVVDCANGAAYHVTPSALWELGAEVIAIGVEPNGKNINAGVGSTHLDAIKAKVRETRADIGIALDGDADRLIVVDEKCQTVDGDQIMALIGTQLAARGELRGGGVVATVMSNLGLERHLNAHGLTLERTAVGDRYVLERMRSGGFNVGGEQSGHMILTDHATTGDGTVAALQVLAALVSSGKPASELLHLFDPVPQLLKNVRFTGGKPLEAKSVKEAIAEAEARLAGKGRLVIRPSGTEPLIRVMAEGDDADEVEAVVDQICDAVRKAA.

S102 functions as the Phosphoserine intermediate in the catalytic mechanism. Mg(2+) is bound by residues S102, D241, D243, and D245. S102 is subject to Phosphoserine.

The protein belongs to the phosphohexose mutase family. It depends on Mg(2+) as a cofactor. Post-translationally, activated by phosphorylation.

The enzyme catalyses alpha-D-glucosamine 1-phosphate = D-glucosamine 6-phosphate. Catalyzes the conversion of glucosamine-6-phosphate to glucosamine-1-phosphate. The sequence is that of Phosphoglucosamine mutase from Novosphingobium aromaticivorans (strain ATCC 700278 / DSM 12444 / CCUG 56034 / CIP 105152 / NBRC 16084 / F199).